The chain runs to 126 residues: Glycine cleavage system H protein (126 aa).

Residues 24-105 (TLTVGITDHA…AYGVWLFKLK (82 aa)) enclose the Lipoyl-binding domain. Position 65 is an N6-lipoyllysine (Lys65).

Belongs to the GcvH family. The glycine cleavage system is composed of four proteins: P, T, L and H. The cofactor is (R)-lipoate.

The glycine cleavage system catalyzes the degradation of glycine. The H protein shuttles the methylamine group of glycine from the P protein to the T protein. This is Glycine cleavage system H protein from Burkholderia vietnamiensis (strain G4 / LMG 22486) (Burkholderia cepacia (strain R1808)).